We begin with the raw amino-acid sequence, 49 residues long: Large ribosomal subunit protein bL32 (49 aa).

This sequence belongs to the bacterial ribosomal protein bL32 family.

In Nautilia profundicola (strain ATCC BAA-1463 / DSM 18972 / AmH), this protein is Large ribosomal subunit protein bL32.